We begin with the raw amino-acid sequence, 488 residues long: N-succinylglutamate 5-semialdehyde dehydrogenase (488 aa).

221-226 (GSSRTG) is an NAD(+) binding site. Active-site residues include glutamate 244 and cysteine 278.

This sequence belongs to the aldehyde dehydrogenase family. AstD subfamily.

The enzyme catalyses N-succinyl-L-glutamate 5-semialdehyde + NAD(+) + H2O = N-succinyl-L-glutamate + NADH + 2 H(+). Its pathway is amino-acid degradation; L-arginine degradation via AST pathway; L-glutamate and succinate from L-arginine: step 4/5. In terms of biological role, catalyzes the NAD-dependent reduction of succinylglutamate semialdehyde into succinylglutamate. The chain is N-succinylglutamate 5-semialdehyde dehydrogenase from Pseudomonas fluorescens (strain SBW25).